Reading from the N-terminus, the 248-residue chain is Probable transcriptional regulatory protein Nwi_2729 (248 aa).

The tract at residues 1 to 21 is disordered; that stretch reads MAGHSQFKNIMHRKGRQDAQK.

It belongs to the TACO1 family.

It localises to the cytoplasm. The sequence is that of Probable transcriptional regulatory protein Nwi_2729 from Nitrobacter winogradskyi (strain ATCC 25391 / DSM 10237 / CIP 104748 / NCIMB 11846 / Nb-255).